The primary structure comprises 565 residues: MVEKQFNIDLELNDTGHIDPFLQDEDKLKLEELIPRILFERKSFLNVTEDSLRKEIDNSLKISEEDALDTEESREDTVEADQQEVFNKHKFELSKNINNALNETQLSLDFVSLLISSVKPSLAKSTISPHLSKFVKPTSLNSDRLGQDSNDNQESKATDSFGQGWKLESLGKITDLFREASTNLNDQVIKERRYWNMINLVLANDEVLFRMRDPQNNARAIGVKYGYGDSGSNFHDQGLALLRKDNQTGEISFHPISSINNAKIVEKVSRFIRVKILSQIDGDYMLTGQSIFNFDFEKSKQSIINDIEKARFFLFEEDLFHQLIREAKLLVNYNVSIISNKIIIEINNIIIEIESIVYDELNEEELENYYQNVNEYSTLHNKKCQLILNYLKLMLCCYYKYNLKLKQKVPTALTKWKQSNSHPLILRPLVGNMRHELNLLNMKSVLDRLMHAHESELSYSKLDVEKFINLATRSKKQNPFQKSIEKPISKFHLVLCNKTSNMLDVNIQLTTNESFVNLIINMTIIRFETEDDFKNNVNGINVLQLGFSDFNEIEECLDWSIQNFV.

The segment covering 138 to 152 has biased composition (polar residues); that stretch reads TSLNSDRLGQDSNDN. The segment at 138–160 is disordered; it reads TSLNSDRLGQDSNDNQESKATDS.

This sequence belongs to the Mediator complex subunit 17 family. In terms of assembly, component of the Mediator complex.

It is found in the nucleus. Functionally, component of the Mediator complex, a coactivator involved in the regulated transcription of nearly all RNA polymerase II-dependent genes. Mediator functions as a bridge to convey information from gene-specific regulatory proteins to the basal RNA polymerase II transcription machinery. Mediator is recruited to promoters by direct interactions with regulatory proteins and serves as a scaffold for the assembly of a functional preinitiation complex with RNA polymerase II and the general transcription factors. In Candida albicans (strain SC5314 / ATCC MYA-2876) (Yeast), this protein is Mediator of RNA polymerase II transcription subunit 17 (SRB4).